A 482-amino-acid polypeptide reads, in one-letter code: E3 ubiquitin-protein ligase makorin-1 (482 aa).

Residues 26 to 38 (ASPTPIPTVTAPS) show a composition bias toward low complexity. The tract at residues 26–52 (ASPTPIPTVTAPSLGAGGGGGGSDGSG) is disordered. Gly residues predominate over residues 40–52 (GAGGGGGGSDGSG). 3 C3H1-type zinc fingers span residues 55–82 (WTKQVTCRYFMHGVCKEGDNCRYSHDLS), 84–111 (SPYSVVCKYFQRGYCIYGDRCRYEHSKP), and 208–235 (ETKKQLCPYAAVGECRYGENCVYLHGDS). Residues 236–263 (CDMCGLQVLHPMDAAQRSQHIKSCIEAH) form a makorin-type Cys-His region. An RING-type zinc finger spans residues 281 to 335 (CGICMEVVYEKANPSERRFGILSNCNHTYCLKCIRKWRSAKQFESKIIKSCPECR). Residues 364-393 (AMSNKACRYFDEGRGSCPFGGNCFYKHAYP) form a C3H1-type 4 zinc finger.

As to quaternary structure, interacts with p53/TP53 and CDKN1A. Interacts with TERT, modulating telomere length homeostasis. Auto-ubiquitinated; which leads to proteasomal degradation. Ubiquitous.

It carries out the reaction S-ubiquitinyl-[E2 ubiquitin-conjugating enzyme]-L-cysteine + [acceptor protein]-L-lysine = [E2 ubiquitin-conjugating enzyme]-L-cysteine + N(6)-ubiquitinyl-[acceptor protein]-L-lysine.. The protein operates within protein modification; protein ubiquitination. E3 ubiquitin ligase catalyzing the covalent attachment of ubiquitin moieties onto substrate proteins. These substrates include FILIP1, p53/TP53, CDKN1A and TERT. Keeps cells alive by suppressing p53/TP53 under normal conditions, but stimulates apoptosis by repressing CDKN1A under stress conditions. Acts as a negative regulator of telomerase. Has negative and positive effects on RNA polymerase II-dependent transcription. The protein is E3 ubiquitin-protein ligase makorin-1 (MKRN1) of Homo sapiens (Human).